A 232-amino-acid chain; its full sequence is uncharacterized protein (232 aa).

Positions methionine 1–aspartate 71 are disordered. Acidic residues predominate over residues aspartate 25–aspartate 38. Basic and acidic residues predominate over residues lysine 44–aspartate 71.

This is an uncharacterized protein from Schizosaccharomyces pombe (strain 972 / ATCC 24843) (Fission yeast).